An 816-amino-acid polypeptide reads, in one-letter code: Sucrose synthase 2 (816 aa).

Ser-15 is modified (phosphoserine). The interval 280–757 is GT-B glycosyltransferase; it reads MVFNVVILSP…GLQRIEEKYT (478 aa).

This sequence belongs to the glycosyltransferase 1 family. Plant sucrose synthase subfamily.

The catalysed reaction is an NDP-alpha-D-glucose + D-fructose = a ribonucleoside 5'-diphosphate + sucrose + H(+). Functionally, sucrose-cleaving enzyme that provides UDP-glucose and fructose for various metabolic pathways. The protein is Sucrose synthase 2 (SUS1) of Zea mays (Maize).